The chain runs to 433 residues: Glutamyl-tRNA reductase (433 aa).

Residues T49–R52, S109, E114–Q116, and Q120 contribute to the substrate site. Catalysis depends on C50, which acts as the Nucleophile. G189–S194 contributes to the NADP(+) binding site.

The protein belongs to the glutamyl-tRNA reductase family. In terms of assembly, homodimer.

It carries out the reaction (S)-4-amino-5-oxopentanoate + tRNA(Glu) + NADP(+) = L-glutamyl-tRNA(Glu) + NADPH + H(+). The protein operates within porphyrin-containing compound metabolism; protoporphyrin-IX biosynthesis; 5-aminolevulinate from L-glutamyl-tRNA(Glu): step 1/2. Its pathway is porphyrin-containing compound metabolism; chlorophyll biosynthesis. Catalyzes the NADPH-dependent reduction of glutamyl-tRNA(Glu) to glutamate 1-semialdehyde (GSA). In Acaryochloris marina (strain MBIC 11017), this protein is Glutamyl-tRNA reductase.